The chain runs to 102 residues: Small ribosomal subunit protein uS17 (102 aa).

The interval 1–27 is disordered; the sequence is MEQTEEHTDTHTDEQDEAVDRNDRKER.

It belongs to the universal ribosomal protein uS17 family. Part of the 30S ribosomal subunit.

Functionally, one of the primary rRNA binding proteins, it binds specifically to the 5'-end of 16S ribosomal RNA. This is Small ribosomal subunit protein uS17 from Salinibacter ruber (strain DSM 13855 / M31).